The primary structure comprises 525 residues: Lymphocyte activation gene 3 protein (525 aa).

A signal peptide spans M1–P22. Over L23 to L450 the chain is Extracellular. Residues G37–G167 form the Ig-like V-type domain. Positions G37–S252 are interaction with FGL1. An intrachain disulfide couples C44 to C160. A disordered region spans residues T62–R97. The span at S69–A87 shows a compositional bias: pro residues. One can recognise an Ig-like C2-type 1 domain in the interval Q168–S252. N188 carries an N-linked (GlcNAc...) asparagine glycan. C189 and C241 are joined by a disulfide. N-linked (GlcNAc...) asparagine glycosylation is found at N250 and N256. Ig-like C2-type domains lie at P265–N343 and L348–R419. Residues C282 and C333 are joined by a disulfide bond. The N-linked (GlcNAc...) asparagine glycan is linked to N343. The cysteines at positions 369 and 412 are disulfide-linked. Residues E429–L450 are connecting peptide. Residues L451–F471 traverse the membrane as a helical segment. Residues H472–L525 lie on the Cytoplasmic side of the membrane. A disordered region spans residues E487–L525. The KIEELE motif motif lies at K498 to E503. Positions E501–Q524 are 12 X 2 AA tandem repeats of E-X. Acidic residues predominate over residues L502–L525.

This sequence belongs to the LAG3 family. As to quaternary structure, interacts with MHC class II (MHC-II); selectively recognizes stable complexes of peptide and MHC-II. Interacts with FGL1 (via the Fibrinogen C-terminal domain). In terms of processing, proteolytically cleaved by ADAM10 and ADAM17 within the connecting peptide region, leading to release of Secreted lymphocyte activation gene 3 protein (sLAG-3). ADAM10 mediates constitutive cleavage, but cleavage increases following T-cell activation, whereas shedding by ADAM17 is induced by TCR signaling in a PRKCQ-dependent manner. Primarily expressed in activated T-cells and a subset of natural killer (NK) cells.

The protein resides in the cell membrane. The protein localises to the secreted. In terms of biological role, lymphocyte activation gene 3 protein: Inhibitory receptor on antigen activated T-cells. Delivers inhibitory signals upon binding to ligands, such as FGL1. FGL1 constitutes a major ligand of LAG3 and is responsible for LAG3 T-cell inhibitory function. Following TCR engagement, LAG3 associates with CD3-TCR in the immunological synapse and directly inhibits T-cell activation. May inhibit antigen-specific T-cell activation in synergy with PDCD1/PD-1, possibly by acting as a coreceptor for PDCD1/PD-1. Negatively regulates the proliferation, activation, effector function and homeostasis of both CD8(+) and CD4(+) T-cells. Also mediates immune tolerance: constitutively expressed on a subset of regulatory T-cells (Tregs) and contributes to their suppressive function. Also acts as a negative regulator of plasmacytoid dendritic cell (pDCs) activation. Binds MHC class II (MHC-II); the precise role of MHC-II-binding is however unclear. May function as a ligand for MHC class II (MHC-II) on antigen-presenting cells (APC), promoting APC activation/maturation and driving Th1 immune response. The sequence is that of Lymphocyte activation gene 3 protein from Homo sapiens (Human).